A 392-amino-acid polypeptide reads, in one-letter code: MKLELTPRQRKILWATVRRYIATAEPVGSKTLAQSYNLGVSTATIRNDLATLEQVGLLFQPHTSAGRIPSDFGYRVYVNDLLSSANMDGIPNDAPQPEPHPALQQLLDQLNRELGDDLDSFLQRVAQLLAHLSGCIALITPPQGPVVAVHHVQLLSVGPGRVMVLVVTDSYQTHSALVSPPDWPDDRREDLEDELQLLSNFLTLKLRGKTFAELQDLSWLKLDEEFRAYSHWLQQLLRSVVQRYLRPSLGQVFSAGMTELMRQPEFSQAQRMQAVAQLLEEGSEQLQGMIGLYSTPGCLFTSEAALSAPSAREKASSSTADQDPSHNVPVIIYIGSENPLESLHHCTVIASVYRRRSAPLGTVTLLGPTRMAYERSIAAVQTVASHLTRALA.

Belongs to the HrcA family.

Its function is as follows. Negative regulator of class I heat shock genes (grpE-dnaK-dnaJ and groELS operons). Prevents heat-shock induction of these operons. In Synechococcus sp. (strain JA-3-3Ab) (Cyanobacteria bacterium Yellowstone A-Prime), this protein is Heat-inducible transcription repressor HrcA.